Here is a 188-residue protein sequence, read N- to C-terminus: A-type ATP synthase subunit E (188 aa).

The protein belongs to the V-ATPase E subunit family. In terms of assembly, has multiple subunits with at least A(3), B(3), C, D, E, F, H, I and proteolipid K(x).

The protein localises to the cell membrane. In terms of biological role, component of the A-type ATP synthase that produces ATP from ADP in the presence of a proton gradient across the membrane. The protein is A-type ATP synthase subunit E of Archaeoglobus fulgidus (strain ATCC 49558 / DSM 4304 / JCM 9628 / NBRC 100126 / VC-16).